The sequence spans 233 residues: Ribosomal RNA small subunit methyltransferase G (233 aa).

Residues G91, M96, 142 to 143 (VE), and R157 each bind S-adenosyl-L-methionine.

It belongs to the methyltransferase superfamily. RNA methyltransferase RsmG family.

The protein resides in the cytoplasm. It carries out the reaction guanosine(527) in 16S rRNA + S-adenosyl-L-methionine = N(7)-methylguanosine(527) in 16S rRNA + S-adenosyl-L-homocysteine. Its function is as follows. Specifically methylates the N7 position of guanine in position 527 of 16S rRNA. The chain is Ribosomal RNA small subunit methyltransferase G from Cupriavidus necator (strain ATCC 17699 / DSM 428 / KCTC 22496 / NCIMB 10442 / H16 / Stanier 337) (Ralstonia eutropha).